The sequence spans 117 residues: Cuticle protein CP1243 (117 aa).

4 tandem repeats follow at residues 1–17 (NYGE…LVQF), 26–43 (AEIG…HVQF), 67–84 (QPYG…NRQF), and 93–110 (VLVG…NVQF).

In terms of tissue distribution, calcified shell.

The polypeptide is Cuticle protein CP1243 (Cancer pagurus (Rock crab)).